The primary structure comprises 142 residues: Hemoglobin subunit alpha-2 (142 aa).

Ser1 is modified (N-acetylserine). The Globin domain maps to 1–142 (SLSTKDKETV…LSRALSEKYR (142 aa)). His59 contacts O2. Position 88 (His88) interacts with heme b.

It belongs to the globin family. In terms of assembly, hb2 is a heterotetramer of two alpha-2 chains and two beta chains. In terms of tissue distribution, red blood cells.

Its function is as follows. Involved in oxygen transport from gills to the various peripheral tissues. This chain is Hemoglobin subunit alpha-2 (hba2), found in Trematomus newnesi (Dusky notothen).